Consider the following 352-residue polypeptide: DNA integrity scanning protein DisA (352 aa).

Residues 3–143 (PQELIEKIKL…NYKYVVNQVD (141 aa)) form the DAC domain. Residues Gly71, Leu89, and 102–106 (TRHRT) contribute to the ATP site.

Belongs to the DisA family. In terms of assembly, homooctamer. The cofactor is Mg(2+).

It carries out the reaction 2 ATP = 3',3'-c-di-AMP + 2 diphosphate. Participates in a DNA-damage check-point. DisA forms globular foci that rapidly scan along the chromosomes searching for lesions. In terms of biological role, also has diadenylate cyclase activity, catalyzing the condensation of 2 ATP molecules into cyclic di-AMP (c-di-AMP). c-di-AMP likely acts as a signaling molecule that may couple DNA integrity with a cellular process. In Thermotoga neapolitana (strain ATCC 49049 / DSM 4359 / NBRC 107923 / NS-E), this protein is DNA integrity scanning protein DisA.